The chain runs to 85 residues: Large ribosomal subunit protein eL43 (85 aa).

The segment at 38 to 59 (CPVCGRKAVRRISTGIWQCQKC) adopts a C4-type zinc-finger fold.

Belongs to the eukaryotic ribosomal protein eL43 family. Zn(2+) is required as a cofactor.

In Thermococcus sibiricus (strain DSM 12597 / MM 739), this protein is Large ribosomal subunit protein eL43.